Reading from the N-terminus, the 172-residue chain is 3-hydroxydecanoyl-[acyl-carrier-protein] dehydratase (172 aa).

The active site involves His-71.

It belongs to the thioester dehydratase family. FabA subfamily. Homodimer.

It is found in the cytoplasm. It carries out the reaction a (3R)-hydroxyacyl-[ACP] = a (2E)-enoyl-[ACP] + H2O. The enzyme catalyses (3R)-hydroxydecanoyl-[ACP] = (2E)-decenoyl-[ACP] + H2O. The catalysed reaction is (2E)-decenoyl-[ACP] = (3Z)-decenoyl-[ACP]. Its pathway is lipid metabolism; fatty acid biosynthesis. Its function is as follows. Necessary for the introduction of cis unsaturation into fatty acids. Catalyzes the dehydration of (3R)-3-hydroxydecanoyl-ACP to E-(2)-decenoyl-ACP and then its isomerization to Z-(3)-decenoyl-ACP. Can catalyze the dehydratase reaction for beta-hydroxyacyl-ACPs with saturated chain lengths up to 16:0, being most active on intermediate chain length. The polypeptide is 3-hydroxydecanoyl-[acyl-carrier-protein] dehydratase (Klebsiella pneumoniae subsp. pneumoniae (strain ATCC 700721 / MGH 78578)).